We begin with the raw amino-acid sequence, 303 residues long: Recombination-associated protein RdgC (303 aa).

Belongs to the RdgC family.

Its subcellular location is the cytoplasm. The protein resides in the nucleoid. Functionally, may be involved in recombination. This Serratia proteamaculans (strain 568) protein is Recombination-associated protein RdgC.